Reading from the N-terminus, the 291-residue chain is Gamma-sarcoglycan (291 aa).

Residues 38 to 58 traverse the membrane as a helical; Signal-anchor for type II membrane protein segment; that stretch reads LFVLLLLIILLVNFALTIWIL. Residues 59–291 are Extracellular-facing; the sequence is KVMWFSPTGM…TCHEHSHICL (233 aa). The N-linked (GlcNAc...) asparagine glycan is linked to Asn110. 2 disulfides stabilise this stretch: Cys265-Cys290 and Cys267-Cys283.

It belongs to the sarcoglycan beta/delta/gamma/zeta family. As to quaternary structure, interacts with the syntrophin SNTA1. Cross-link to form 2 major subcomplexes: one consisting of SGCB, SGCD and SGCG and the other consisting of SGCB and SGCD. The association between SGCB and SGCG is particularly strong while SGCA is loosely associated with the other sarcoglycans. Interacts with FLNC. Disulfide bonds are present.

The protein localises to the cell membrane. The protein resides in the sarcolemma. Its subcellular location is the cytoplasm. It is found in the cytoskeleton. Functionally, component of the sarcoglycan complex, a subcomplex of the dystrophin-glycoprotein complex which forms a link between the F-actin cytoskeleton and the extracellular matrix. This chain is Gamma-sarcoglycan (SGCG), found in Canis lupus familiaris (Dog).